The following is a 1080-amino-acid chain: Adenylate cyclase type 7 (1080 aa).

Topologically, residues 1–33 are cytoplasmic; it reads MPAKGRYFLNEGEEGPDQDALYEKYQLTSQHGP. 6 consecutive transmembrane segments (helical) span residues 34–54, 63–83, 95–117, 122–142, 147–167, and 176–196; these read LLLT…IIAF, QAIL…SVLM, ALAL…DAWT, AWEQ…LLPF, AVAV…SLMG, and VGLQ…TGAF. At 197 to 594 the chain is on the cytoplasmic side; that stretch reads HKHQMQDASR…YRLAPIPRAR (398 aa). The 128-residue stretch at 279–406 folds into the Guanylate cyclase 1 domain; it reads SILYADIVGF…HDVSLANRME (128 aa). D284, I285, and D328 together coordinate Mg(2+). ATP contacts are provided by residues 284–289, 326–328, and R372; these read DIVGFT and LGD. The tract at residues 454 to 474 is disordered; sequence DPRSQQPPPPSQHLPRPKGDA. The mediates regulation of adenylate cyclase activity by C5 alpha-induced G- beta and gamma pathway stretch occupies residues 477–482; the sequence is KMRASV. The tract at residues 491–499 is mediates regulation of adenylate cyclase activity by sphingosine 1-phosphate-induced G alpha 13 pathway; that stretch reads WGAARPFAH. The segment at 504 to 546 is disordered; the sequence is ESVSSGETHVPNGRRPKSVPQRHRRTPDRSMSPKGRSEDDSYD. The segment at 506–584 is modulates adenylate cyclase activity by modulating the binding of G(s)alpha to the high-affinity G(s)alpha binding site in 7C1a/7C2; it reads VSSGETHVPN…IFLEKGFERE (79 aa). Over residues 515 to 529 the composition is skewed to basic residues; that stretch reads NGRRPKSVPQRHRRT. 3 consecutive transmembrane segments (helical) span residues 595 to 615, 620 to 640, and 669 to 688; these read HDFA…VLLM, ALGV…GLCF, and LTLA…INLP. An N-linked (GlcNAc...) asparagine glycan is attached at N701. A run of 2 helical transmembrane segments spans residues 718-737 and 746-773; these read PLPY…SVFL and VLLT…CGQG. N-linked (GlcNAc...) asparagine glycosylation is found at N776 and N781. A helical membrane pass occupies residues 794–814; that stretch reads DLKTMTNFYLVLFYITLLTLS. Residues 815 to 1080 are Cytoplasmic-facing; that stretch reads RQIDYYCRLD…TAKFQGLGLN (266 aa). One can recognise a Guanylate cyclase 2 domain in the interval 879–1023; sequence CVMFASVPDF…NTVNVASRME (145 aa). Residues K931, 1010–1012, 1017–1021, and K1057 contribute to the ATP site; these read DIW and NVASR.

The protein belongs to the adenylyl cyclase class-4/guanylyl cyclase family. Mg(2+) is required as a cofactor. Requires Mn(2+) as cofactor. Phosphorylated by PRKCD.

It localises to the membrane. It carries out the reaction ATP = 3',5'-cyclic AMP + diphosphate. With respect to regulation, activated by the G protein alpha subunit. Activated by the G protein beta and gamma subunit complex. Activated by GNA13 and GNA12. Ethanol and phorbol 12,13-dibutanoate significantly potentiate adenylate cyclase activity generated in response to the activation of the prostanoid receptor by the agonist prostaglandin E1(1-) in a PKC-dependent manner. Inhibited by lithium. Functionally, catalyzes the formation of cAMP in response to activation of G protein-coupled receptors. Functions in signaling cascades activated namely by thrombin and sphingosine 1-phosphate and mediates regulation of cAMP synthesis through synergistic action of the stimulatory G alpha protein with GNA13. Also, during inflammation, mediates zymosan-induced increase intracellular cAMP, leading to protein kinase A pathway activation in order to modulate innate immune responses through heterotrimeric G proteins G(12/13). Functions in signaling cascades activated namely by dopamine and C5 alpha chain and mediates regulation of cAMP synthesis through synergistic action of the stimulatory G protein with G beta:gamma complex. Functions, through cAMP response regulation, to keep inflammation under control during bacterial infection by sensing the presence of serum factors, such as the bioactive lysophospholipid (LPA) that regulate LPS-induced TNF-alpha production. However, it is also required for the optimal functions of B and T cells during adaptive immune responses by regulating cAMP synthesis in both B and T cells. The polypeptide is Adenylate cyclase type 7 (Homo sapiens (Human)).